The primary structure comprises 126 residues: Small ribosomal subunit protein uS12 (126 aa).

D89 carries the post-translational modification 3-methylthioaspartic acid. The interval 99 to 126 (RGSLDTSGVNDRKQGRSKYGTKKPKDKK) is disordered. Positions 113–126 (GRSKYGTKKPKDKK) are enriched in basic residues.

This sequence belongs to the universal ribosomal protein uS12 family. As to quaternary structure, part of the 30S ribosomal subunit. Contacts proteins S8 and S17. May interact with IF1 in the 30S initiation complex.

In terms of biological role, with S4 and S5 plays an important role in translational accuracy. Its function is as follows. Interacts with and stabilizes bases of the 16S rRNA that are involved in tRNA selection in the A site and with the mRNA backbone. Located at the interface of the 30S and 50S subunits, it traverses the body of the 30S subunit contacting proteins on the other side and probably holding the rRNA structure together. The combined cluster of proteins S8, S12 and S17 appears to hold together the shoulder and platform of the 30S subunit. This is Small ribosomal subunit protein uS12 from Legionella pneumophila (strain Paris).